The sequence spans 254 residues: MNRRRRIYEGKAKILYEGPEPGTLVQFFKDDATAFNAKKHEVIDGKGVLNNRISEHIFTQLNRIGIPTHFIRRLNMREQLIKEVEIIPLEVVVRNVAAGSLAKHLGLEEGTILPRSIIEFYYKADALNDPMVTEEHITAFGWASPQEIDDIMALAIRVNDFLTGLFLGIGIQLVDFKMECGRLWEGDMMRIVVADEISPDSARLWDITTNDKLDKDRFRRDMGGLVEAYQEVARRLGIMNENDTPRPSGPTLVK.

The protein belongs to the SAICAR synthetase family.

It carries out the reaction 5-amino-1-(5-phospho-D-ribosyl)imidazole-4-carboxylate + L-aspartate + ATP = (2S)-2-[5-amino-1-(5-phospho-beta-D-ribosyl)imidazole-4-carboxamido]succinate + ADP + phosphate + 2 H(+). Its pathway is purine metabolism; IMP biosynthesis via de novo pathway; 5-amino-1-(5-phospho-D-ribosyl)imidazole-4-carboxamide from 5-amino-1-(5-phospho-D-ribosyl)imidazole-4-carboxylate: step 1/2. The protein is Phosphoribosylaminoimidazole-succinocarboxamide synthase of Brucella abortus (strain S19).